The sequence spans 280 residues: Bis(5'-nucleosyl)-tetraphosphatase, symmetrical (280 aa).

It belongs to the Ap4A hydrolase family.

It catalyses the reaction P(1),P(4)-bis(5'-adenosyl) tetraphosphate + H2O = 2 ADP + 2 H(+). Hydrolyzes diadenosine 5',5'''-P1,P4-tetraphosphate to yield ADP. The protein is Bis(5'-nucleosyl)-tetraphosphatase, symmetrical of Paracidovorax citrulli (strain AAC00-1) (Acidovorax citrulli).